A 342-amino-acid polypeptide reads, in one-letter code: Aquaporin-7 (342 aa).

Residues 1-36 (MVQASGHRRSTRGSKMVSWSVIAKIQEILQRKMVRE) are Cytoplasmic-facing. Residue Ser20 is modified to Phosphoserine. The helical transmembrane segment at 37 to 54 (FLAEFMSTYVMMVFGLGS) threads the bilayer. Over 55–67 (VAHMVLNKKYGSY) the chain is Extracellular. A helical transmembrane segment spans residues 68–85 (LGVNLGFGFGVTMGVHVA). Residues 86–89 (GRIS) are Cytoplasmic-facing. Positions 90–103 (GAHMNAAVTFANCA) form an intramembrane region, discontinuously helical. The NPA 1 signature appears at 94–96 (NAA). The Cytoplasmic portion of the chain corresponds to 104-111 (LGRVPWRK). The helical transmembrane segment at 112–132 (FPVYVLGQFLGSFLAAATIYS) threads the bilayer. Topologically, residues 133–170 (LFYTAILHFSGGQLMVTGPVATAGIFATYLPDHMTLWR) are extracellular. The helical transmembrane segment at 171-188 (GFLNEAWLTGMLQLCLFA) threads the bilayer. Over 189 to 200 (ITDQENNPALPG) the chain is Cytoplasmic. The helical transmembrane segment at 201–217 (TEALVIGILVVIIGVSL) threads the bilayer. Topologically, residues 218–221 (GMNT) are extracellular. Positions 222–235 (GYAINPSRDLPPRI) form an intramembrane region, discontinuously helical. The NPA 2 signature appears at 226–228 (NPS). At 236–253 (FTFIAGWGKQVFSNGENW) the chain is on the extracellular side. Residues 254–275 (WWVPVVAPLLGAYLGGIIYLVF) traverse the membrane as a helical segment. Topologically, residues 276 to 342 (IGSTIPREPL…LHESMALEHF (67 aa)) are cytoplasmic.

The protein belongs to the MIP/aquaporin (TC 1.A.8) family. Homotetramer; each monomer provides an independent glycerol/water pore. Two homotetramers on opposing membranes can dimerize, forming a cell-cell junction. Interacts with PLIN1. In terms of processing, phosphorylation by PKA could prevent the interaction with PLIN1. As to expression, detected in the sperm head (at protein level). Detected in white adipose tissue.

The protein localises to the cell membrane. It localises to the cytoplasmic vesicle membrane. The protein resides in the lipid droplet. The enzyme catalyses glycerol(in) = glycerol(out). The catalysed reaction is H2O(in) = H2O(out). It catalyses the reaction urea(in) = urea(out). With respect to regulation, glycerol transport is regulated by pH, with the porin being permeable to glycerol at pH 7.4 but not at pH 5.5. Water permeability, however, is not influenced by pH. Inhibited by mercury ions. Aquaglyceroporins form homotetrameric transmembrane channels, with each monomer independently mediating glycerol and water transport across the plasma membrane along their osmotic gradient. Could also be permeable to urea. Mediates the efflux of glycerol, formed upon triglyceride hydrolysis, to avoid its accumulation in adipocytes and to make it available to other tissues. In the kidney, mediates the reabsorption of glycerol, preventing its loss in urine, again participating to energy homeostasis. In pancreatic beta cells, it also mediates the efflux of glycerol, regulating its intracellular levels. This chain is Aquaporin-7, found in Homo sapiens (Human).